Here is a 545-residue protein sequence, read N- to C-terminus: MAKEIIFADDARNRLYSGVKKLNDAVKVTMGPRGRNVLIQKSFGAPSITKDGVSVAKEIELKDTIENMGAGLVREVASKTNDEAGDGTTTATVLAHAIFKEGLRNITAGANPIEVKRGMDKFVEAVTSELKSAAKKVDGKKEIAQVATISANSDSSIGDLIAEAMEKVGKDGVITVEEAKSINDELNVVEGMQFDRGYLSPYFITNAEKMQVELSSPFILLFDKKITNLKDLLPVLEQIQKTGKPLLIVAEDIEGEALATLVVNKLRGVLNISAVKAPGFGDRRKAMLEDIAILTGGEVISEELGRTLESASLQDLGQADRVVIDKDNTTIVNGAGDKDSIEARINQIKAQIAETTSDYDKEKLQERLAKLSGGVAVIKVGAATETEMKEKKDRVDDALNATKAAVEEGIVVGGGAALIKAGNRVNLSLKGDELIGAEIVKRALFAPLRQIAENAGFDAGVVANSVSCADCPNYGFNAASGEYVDMFEAGIIDPVKVERIALQNAVSVASLLLTTEATVSEIKEDKPAMPPMPDMGGMGGMGGMM.

Residues 29–32 (TMGP), lysine 50, 86–90 (DGTTT), glycine 414, 477–479 (NAA), and aspartate 493 each bind ATP.

This sequence belongs to the chaperonin (HSP60) family. Forms a cylinder of 14 subunits composed of two heptameric rings stacked back-to-back. Interacts with the co-chaperonin GroES.

It is found in the cytoplasm. It catalyses the reaction ATP + H2O + a folded polypeptide = ADP + phosphate + an unfolded polypeptide.. Together with its co-chaperonin GroES, plays an essential role in assisting protein folding. The GroEL-GroES system forms a nano-cage that allows encapsulation of the non-native substrate proteins and provides a physical environment optimized to promote and accelerate protein folding. This is Chaperonin GroEL from Campylobacter fetus subsp. fetus (strain 82-40).